A 348-amino-acid chain; its full sequence is Dihydroorotase (348 aa).

Zn(2+)-binding residues include His-17 and His-19. Substrate-binding positions include 19–21 (HLR) and Asn-45. Lys-103, His-140, and His-178 together coordinate Zn(2+). Lys-103 is subject to N6-carboxylysine. His-140 is a substrate binding site. Position 223 (Leu-223) interacts with substrate. Residue Asp-251 participates in Zn(2+) binding. Asp-251 is a catalytic residue. 2 residues coordinate substrate: His-255 and Ala-267.

This sequence belongs to the metallo-dependent hydrolases superfamily. DHOase family. Class II DHOase subfamily. In terms of assembly, homodimer. Zn(2+) serves as cofactor.

It carries out the reaction (S)-dihydroorotate + H2O = N-carbamoyl-L-aspartate + H(+). The protein operates within pyrimidine metabolism; UMP biosynthesis via de novo pathway; (S)-dihydroorotate from bicarbonate: step 3/3. In terms of biological role, catalyzes the reversible cyclization of carbamoyl aspartate to dihydroorotate. The chain is Dihydroorotase from Escherichia coli (strain SMS-3-5 / SECEC).